We begin with the raw amino-acid sequence, 100 residues long: Aspartyl/glutamyl-tRNA(Asn/Gln) amidotransferase subunit C (100 aa).

The protein belongs to the GatC family. In terms of assembly, heterotrimer of A, B and C subunits.

It catalyses the reaction L-glutamyl-tRNA(Gln) + L-glutamine + ATP + H2O = L-glutaminyl-tRNA(Gln) + L-glutamate + ADP + phosphate + H(+). It carries out the reaction L-aspartyl-tRNA(Asn) + L-glutamine + ATP + H2O = L-asparaginyl-tRNA(Asn) + L-glutamate + ADP + phosphate + 2 H(+). Allows the formation of correctly charged Asn-tRNA(Asn) or Gln-tRNA(Gln) through the transamidation of misacylated Asp-tRNA(Asn) or Glu-tRNA(Gln) in organisms which lack either or both of asparaginyl-tRNA or glutaminyl-tRNA synthetases. The reaction takes place in the presence of glutamine and ATP through an activated phospho-Asp-tRNA(Asn) or phospho-Glu-tRNA(Gln). The polypeptide is Aspartyl/glutamyl-tRNA(Asn/Gln) amidotransferase subunit C (Streptococcus uberis (strain ATCC BAA-854 / 0140J)).